The following is a 225-amino-acid chain: Cardiotrophin-like cytokine factor 1 (225 aa).

Positions 1 to 27 (MDLRAGDSWGMLACLCTVLWHLPAVPA) are cleaved as a signal peptide. Asn29 is a glycosylation site (N-linked (GlcNAc...) asparagine).

This sequence belongs to the IL-6 superfamily. In terms of assembly, forms a heteromeric complex with cardiotrophin-like cytokine CRLF1/CLF-1; the CRLF1-CLCF1 complex is a ligand for the ciliary neurotrophic factor receptor/CNTFR. The CRLF1-CLCF1 heterodimer binds SORL1 (via N-terminal ectodomain); within this complex, the interaction is mediated predominantly by the CRLF1 moiety. The tripartite signaling complex formed by CRLF1, CLCF1 and CNTFR also binds SORL1.

The protein localises to the secreted. In complex with CRLF1, forms a heterodimeric neurotropic cytokine that plays a crucial role during neuronal development. Also stimulates B-cells. Binds to and activates the ILST/gp130 receptor. The protein is Cardiotrophin-like cytokine factor 1 (Clcf1) of Mus musculus (Mouse).